A 392-amino-acid polypeptide reads, in one-letter code: Pannexin-3 (392 aa).

The Cytoplasmic portion of the chain corresponds to 1 to 39 (MSLAHTAAEYMLSDALLPDRRGSRLKGLRLELPLDKMVK). A helical membrane pass occupies residues 40 to 60 (FVTVGFPLLLMSLAFAQEFSS). Residues 61 to 113 (GSPISCFSPSNFSVRQAVFVDSSCWDSLAHYKQDEAGQYTVKSLWPHKALPYS) lie on the Extracellular side of the membrane. The N-linked (GlcNAc...) asparagine glycan is linked to N71. A helical membrane pass occupies residues 114-134 (LLALAVAMYLPVLLWQYAAVP). Residues 135 to 215 (ALSSDLLFII…VATYLLRNAL (81 aa)) lie on the Cytoplasmic side of the membrane. Residues 216 to 236 (LLLFTSATYLYLGHFHLDVFF) form a helical membrane-spanning segment. Topologically, residues 237-267 (QEEFSCSIKTGLLHEETHVPELITCRLTSLS) are extracellular. The helical transmembrane segment at 268 to 288 (VFQIVSVSSVAIYTVLVPVII) threads the bilayer. Residues 289 to 392 (YNLTRLCRWD…LTQHTYDEHP (104 aa)) are Cytoplasmic-facing.

Belongs to the pannexin family. Homoheptameric. Skin.

Its subcellular location is the cell membrane. The protein localises to the cell junction. It is found in the gap junction. It localises to the endoplasmic reticulum membrane. The catalysed reaction is Ca(2+)(in) = Ca(2+)(out). It catalyses the reaction ATP(in) = ATP(out). In terms of biological role, regulator of osteoblast differentiation by functionning as a Ca(2+) channel in the endoplasmic reticulum which regulates calmodulin (CaM) pathways. Allows ATP release into the extracellular space and activation or purinergic receptors. In Rattus norvegicus (Rat), this protein is Pannexin-3 (Panx3).